We begin with the raw amino-acid sequence, 421 residues long: C2 calcium-dependent domain-containing protein 4C (421 aa).

Disordered stretches follow at residues 13–97 (RGSG…AKLA), 119–140 (DWLSEEATDADPQAQGAMSLPS), 158–228 (HTRR…SPFG), and 250–303 (VSQL…TVHV). A compositionally biased stretch (polar residues) spans 215–228 (ESDTGSSAESSPFG). Phosphoserine is present on residues Ser262, Ser264, and Ser273. Residues 305–421 (PRGSVRLLAE…LPLTSLLPFL (117 aa)) form the C2 domain.

The protein belongs to the C2CD4 family.

The polypeptide is C2 calcium-dependent domain-containing protein 4C (C2CD4C) (Homo sapiens (Human)).